The chain runs to 275 residues: DNA repair protein RecO (275 aa).

A disordered region spans residues 1–38; that stretch reads MTDEADADPQPFAAPPATGAPAADKPARKPRRAAPRTS. Residues 8–24 show a composition bias toward low complexity; that stretch reads DPQPFAAPPATGAPAAD.

It belongs to the RecO family.

Its function is as follows. Involved in DNA repair and RecF pathway recombination. The sequence is that of DNA repair protein RecO from Burkholderia pseudomallei (strain 1710b).